A 201-amino-acid polypeptide reads, in one-letter code: RILP-like protein 2 (201 aa).

The 95-residue stretch at 14–108 (GPEIALDKDP…LKDGPQMGVG (95 aa)) folds into the RH1 domain. Residues 67–155 (LEMLEALVNQ…AQDELQCYKS (89 aa)) are a coiled coil. An RH2 domain is found at 121-197 (RPRFTLQELR…TVKSLFSFKQ (77 aa)). The interval 177–201 (SPRENESKEKSTVKSLFSFKQGKQT) is disordered. Basic and acidic residues predominate over residues 179–188 (RENESKEKST).

It belongs to the RILPL family.

The protein localises to the cytoplasm. Its subcellular location is the cytosol. It localises to the cytoskeleton. The protein resides in the microtubule organizing center. It is found in the centrosome. The protein localises to the cell projection. Its subcellular location is the cilium. Its function is as follows. Involved in cell shape and neuronal morphogenesis, positively regulating the establishment and maintenance of dendritic spines. Plays a role in cellular protein transport. The chain is RILP-like protein 2 (rilpl2) from Xenopus tropicalis (Western clawed frog).